We begin with the raw amino-acid sequence, 472 residues long: Squamosa promoter-binding-like protein 18 (472 aa).

The interval 89–110 is disordered; that stretch reads AKVPPSTSTLKRPRGGGGGGGG. The SBP-type zinc-finger motif lies at 112-189; it reads CPSCAVDGCK…DGHNRRRRKP (78 aa). Zn(2+)-binding residues include cysteine 115, cysteine 120, cysteine 137, histidine 140, cysteine 156, cysteine 159, histidine 163, and cysteine 175. Positions 172-188 match the Bipartite nuclear localization signal motif; that stretch reads KRSCRKRLDGHNRRRRK. Disordered regions lie at residues 179 to 218, 233 to 261, and 358 to 381; these read LDGHNRRRRKPQADSMSSGSFMTSQQGTRFASFTPPRPEP, SHHHHPHPVMTSRQPHFVGSPSSATTAAF, and SVDVSRMVQPSPAAAAGAEHHHHH. The span at 192–209 shows a compositional bias: polar residues; it reads DSMSSGSFMTSQQGTRFA. Residues 252–261 are compositionally biased toward low complexity; the sequence is SPSSATTAAF.

As to expression, expressed in young panicles.

The protein resides in the nucleus. Its function is as follows. Trans-acting factor that binds specifically to the consensus nucleotide sequence 5'-TNCGTACAA-3'. May be involved in panicle development. This Oryza sativa subsp. japonica (Rice) protein is Squamosa promoter-binding-like protein 18 (SPL18).